We begin with the raw amino-acid sequence, 206 residues long: Protein GrpE (206 aa).

Positions 1 to 14 (MDKKNEQQEVREEN) are enriched in basic and acidic residues. A disordered region spans residues 1–56 (MDKKNEQQEVREENDTSINQESETQVELEEEVVNEECETSSEKTDEKEVDDENVTD). A compositionally biased stretch (acidic residues) spans 24-39 (TQVELEEEVVNEECET).

It belongs to the GrpE family. Homodimer.

The protein resides in the cytoplasm. Participates actively in the response to hyperosmotic and heat shock by preventing the aggregation of stress-denatured proteins, in association with DnaK and GrpE. It is the nucleotide exchange factor for DnaK and may function as a thermosensor. Unfolded proteins bind initially to DnaJ; upon interaction with the DnaJ-bound protein, DnaK hydrolyzes its bound ATP, resulting in the formation of a stable complex. GrpE releases ADP from DnaK; ATP binding to DnaK triggers the release of the substrate protein, thus completing the reaction cycle. Several rounds of ATP-dependent interactions between DnaJ, DnaK and GrpE are required for fully efficient folding. This is Protein GrpE from Clostridioides difficile (strain 630) (Peptoclostridium difficile).